The following is a 392-amino-acid chain: Pyoverdine export membrane fusion protein PvdR (392 aa).

The tat-type signal signal peptide spans 1 to 36 (MRRSTHTRRRLLLGGLGLLGLGSLLAWTSLPFGAQP). The stretch at 109 to 181 (IDNLKAQLAE…NASLRSDEAE (73 aa)) forms a coiled coil. The segment at 267–286 (PPKPLDQTSQGGGSPASATA) is disordered.

Belongs to the membrane fusion protein (MFP) (TC 8.A.1) family. Part of the tripartite efflux system PvdRT-OpmQ, which is composed of an inner membrane component with both ATPase and permease domains, PvdT, a periplasmic membrane fusion protein, PvdR, and an outer membrane component, OpmQ. Predicted to be exported by the Tat system. The position of the signal peptide cleavage has not been experimentally proven.

The protein localises to the periplasm. Part of the tripartite efflux system PvdRT-OpmQ required for the secretion into the extracellular milieu of the siderophore pyoverdine (PVD), which is involved in iron acquisition. This subunit is an adapter protein that stimulates the ATPase activity of PvdT and connects the inner and outer membrane components. The system is responsible for export of newly synthesized PVD after the final steps of biosynthesis have taken place in the periplasm. It is also responsible for recycling of PVD after internalization of ferri-PVD into the periplasm by the outer-membrane receptor FpvA and release of iron from PVD, thus making PVD available for new cycles of iron uptake. Contributes to resistance against ampicillin. In Pseudomonas putida (strain ATCC 47054 / DSM 6125 / CFBP 8728 / NCIMB 11950 / KT2440), this protein is Pyoverdine export membrane fusion protein PvdR.